We begin with the raw amino-acid sequence, 165 residues long: uncharacterized protein (165 aa).

The disordered stretch occupies residues 1–36 (MTRLCLPRPEAREDPIPVPPRGLGAGEGSGSPVRPP). Residues 135–155 (LLLLMGLGPLLRACGMPLTLL) form a helical membrane-spanning segment.

The protein localises to the membrane. This is an uncharacterized protein from Homo sapiens (Human).